Consider the following 2748-residue polypeptide: Nuclear migration protein NUM1 (2748 aa).

Residues 1-10 (MSHNNRHKKN) show a composition bias toward basic residues. Disordered stretches follow at residues 1–36 (MSHNNRHKKNNDKDSSAGQYANSIDNSLSQESVSTN) and 290–312 (YYQKQHTSDTTVTSDPDSEGTTS). Over residues 17 to 36 (AGQYANSIDNSLSQESVSTN) the composition is skewed to polar residues. A compositionally biased stretch (low complexity) spans 293–304 (KQHTSDTTVTSD). Repeat copies occupy residues 593–656 (PSLE…KLEQ), 657–727 (PSLE…EVEQ), 728–798 (PSLA…EVEQ), 799–862 (PSLA…KLEQ), 863–926 (PSLA…KLEQ), 927–990 (PSLA…KLEQ), 991–1054 (PSLE…KLEQ), 1055–1118 (PSLE…KLEQ), 1119–1182 (PSLE…KLEQ), 1183–1246 (PSLA…KLEQ), 1247–1310 (PSLA…KLEQ), and 1311–1374 (PSLE…KLEQ). A 13 X tandem repeats region spans residues 593 to 1384 (PSLEYLVEHA…PSLEYLVKHA (792 aa)). A phosphoserine mark is found at S611, S675, and S746. 3 positions are modified to phosphoserine: S881, S945, and S1009. A phosphoserine mark is found at S1201, S1265, and S1329. The stretch at 1375–1384 (PSLEYLVKHA) is one 13; truncated repeat. A disordered region spans residues 2111–2133 (ERAERIDEQSINTTSSNSTTTSS). Over residues 2122 to 2133 (NTTSSNSTTTSS) the composition is skewed to low complexity. Phosphoserine occurs at positions 2162, 2164, 2197, 2217, 2220, 2221, 2360, and 2424. A compositionally biased stretch (basic and acidic residues) spans 2444–2460 (KEDKKGQATASKHEYVS). The interval 2444–2536 (KEDKKGQATA…HSSRNTPASR (93 aa)) is disordered. Polar residues predominate over residues 2465-2474 (NKTSTVSTKS). Residues 2492-2503 (SESHPQIEEQSH) are compositionally biased toward basic and acidic residues. Position 2494 is a phosphoserine (S2494). Basic residues predominate over residues 2504–2514 (RTNHHKHHKRQ). The span at 2516-2532 (SLNSNSTSKTTHSSRNT) shows a compositional bias: low complexity. S2545 is modified (phosphoserine). Residues 2573 to 2683 (QTVIGEYLFK…WYNSLRYLLQ (111 aa)) form the PH domain. The tract at residues 2707-2748 (IFPLPGENTKSSSKRLSASRRSVSTRSLRHRVPQSRSFGNLR) is disordered. Low complexity predominate over residues 2720–2730 (KRLSASRRSVS).

As to quaternary structure, interacts with PAC11 when DYN1 is present, and TUB3.

Its subcellular location is the bud tip. Its function is as follows. Controls nuclear migration. NUM1 specifically controls the interaction of the bud neck cytoskeleton with the pre-divisional G2 nucleus. Functions in dynein-anchoring. During late anaphase forms dynein-interacting cortical microtubule capture sites at both cellular poles. This leads to dynein-dependent sliding of the microtubules in the bud. This chain is Nuclear migration protein NUM1 (NUM1), found in Saccharomyces cerevisiae (strain ATCC 204508 / S288c) (Baker's yeast).